The following is a 181-amino-acid chain: NADH-quinone oxidoreductase subunit I (181 aa).

4Fe-4S ferredoxin-type domains follow at residues 44–74 and 90–119; these read LNRY…VEGA and RVYQ…MTND. Residues C54, C57, C60, C64, C99, C102, C105, and C109 each coordinate [4Fe-4S] cluster.

It belongs to the complex I 23 kDa subunit family. In terms of assembly, NDH-1 is composed of 14 different subunits. Subunits NuoA, H, J, K, L, M, N constitute the membrane sector of the complex. [4Fe-4S] cluster is required as a cofactor.

Its subcellular location is the cell membrane. The enzyme catalyses a quinone + NADH + 5 H(+)(in) = a quinol + NAD(+) + 4 H(+)(out). Functionally, NDH-1 shuttles electrons from NADH, via FMN and iron-sulfur (Fe-S) centers, to quinones in the respiratory chain. The immediate electron acceptor for the enzyme in this species is believed to be menaquinone. Couples the redox reaction to proton translocation (for every two electrons transferred, four hydrogen ions are translocated across the cytoplasmic membrane), and thus conserves the redox energy in a proton gradient. This Mycobacterium marinum (strain ATCC BAA-535 / M) protein is NADH-quinone oxidoreductase subunit I.